We begin with the raw amino-acid sequence, 373 residues long: tRNA-specific 2-thiouridylase MnmA (373 aa).

ATP-binding positions include 12–19 (GMSGGVDS) and M38. Residues 98 to 100 (NPD) are interaction with target base in tRNA. The Nucleophile role is filled by C103. A disulfide bridge connects residues C103 and C200. G127 contributes to the ATP binding site. Residues 150 to 152 (KDQ) are interaction with tRNA. C200 functions as the Cysteine persulfide intermediate in the catalytic mechanism. Positions 312–313 (RY) are interaction with tRNA.

Belongs to the MnmA/TRMU family.

It localises to the cytoplasm. The catalysed reaction is S-sulfanyl-L-cysteinyl-[protein] + uridine(34) in tRNA + AH2 + ATP = 2-thiouridine(34) in tRNA + L-cysteinyl-[protein] + A + AMP + diphosphate + H(+). Functionally, catalyzes the 2-thiolation of uridine at the wobble position (U34) of tRNA, leading to the formation of s(2)U34. The chain is tRNA-specific 2-thiouridylase MnmA from Streptococcus pneumoniae (strain ATCC 700669 / Spain 23F-1).